We begin with the raw amino-acid sequence, 506 residues long: Deoxyguanosinetriphosphate triphosphohydrolase (506 aa).

One can recognise an HD domain in the interval 66 to 274 (RLTHSLEVQQ…MEAADDISYC (209 aa)).

The protein belongs to the dGTPase family. Type 1 subfamily. In terms of assembly, homotetramer. It depends on Mg(2+) as a cofactor.

It catalyses the reaction dGTP + H2O = 2'-deoxyguanosine + triphosphate + H(+). DGTPase preferentially hydrolyzes dGTP over the other canonical NTPs. This Yersinia pestis bv. Antiqua (strain Antiqua) protein is Deoxyguanosinetriphosphate triphosphohydrolase.